Reading from the N-terminus, the 494-residue chain is UDP-N-acetylmuramate--L-alanine ligase (494 aa).

134-140 provides a ligand contact to ATP; that stretch reads GSHGKTT.

This sequence belongs to the MurCDEF family.

It localises to the cytoplasm. It carries out the reaction UDP-N-acetyl-alpha-D-muramate + L-alanine + ATP = UDP-N-acetyl-alpha-D-muramoyl-L-alanine + ADP + phosphate + H(+). Its pathway is cell wall biogenesis; peptidoglycan biosynthesis. Cell wall formation. The sequence is that of UDP-N-acetylmuramate--L-alanine ligase from Prochlorococcus marinus (strain NATL1A).